Consider the following 240-residue polypeptide: RNA transcription, translation and transport factor protein (240 aa).

It belongs to the RTRAF family. As to quaternary structure, homodimer. Component of a tRNA-splicing ligase complex.

The protein resides in the nucleus. It is found in the cytoplasm. Its subcellular location is the cytosol. It localises to the perinuclear region. The protein localises to the cytoskeleton. The protein resides in the microtubule organizing center. It is found in the centrosome. Its function is as follows. RNA-binding protein involved in modulation of mRNA transcription by Polymerase II. Component of the tRNA-splicing ligase complex. In Xenopus laevis (African clawed frog), this protein is RNA transcription, translation and transport factor protein.